Reading from the N-terminus, the 97-residue chain is Co-chaperonin GroES (97 aa).

This sequence belongs to the GroES chaperonin family. In terms of assembly, heptamer of 7 subunits arranged in a ring. Interacts with the chaperonin GroEL.

Its subcellular location is the cytoplasm. Together with the chaperonin GroEL, plays an essential role in assisting protein folding. The GroEL-GroES system forms a nano-cage that allows encapsulation of the non-native substrate proteins and provides a physical environment optimized to promote and accelerate protein folding. GroES binds to the apical surface of the GroEL ring, thereby capping the opening of the GroEL channel. The sequence is that of Co-chaperonin GroES from Arthrobacter sp. (strain FB24).